A 539-amino-acid chain; its full sequence is uncharacterized protein (539 aa).

A disordered region spans residues 34-63 (AASEVSPIPQERPTTSLRKPTPRVQRPATD). 11 consecutive transmembrane segments (helical) span residues 103-123 (FATP…TTVF), 141-161 (MTAT…LDTV), 184-204 (ILLL…GILL), 244-264 (GIFH…IFLN), 277-299 (FLGA…IIYI), 325-345 (LAVP…LVTF), 360-380 (VLST…AAAA), 399-419 (THVS…ILFL), 434-454 (VVAL…ADNT), 470-490 (IGGV…AIIL), and 496-516 (WGLY…AGVE).

Belongs to the multi antimicrobial extrusion (MATE) (TC 2.A.66.1) family.

The protein resides in the vacuole membrane. This is an uncharacterized protein from Schizosaccharomyces pombe (strain 972 / ATCC 24843) (Fission yeast).